Reading from the N-terminus, the 255-residue chain is uncharacterized protein (255 aa).

The signal sequence occupies residues 1–23 (MKRLNKLVLGIIFLFLVISITAG). The N-palmitoyl cysteine moiety is linked to residue Cys24. Residue Cys24 is the site of S-diacylglycerol cysteine attachment.

Belongs to the staphylococcal tandem lipoprotein family.

The protein resides in the cell membrane. This is an uncharacterized protein from Staphylococcus aureus (strain Mu50 / ATCC 700699).